We begin with the raw amino-acid sequence, 150 residues long: Cell division protein SepF (150 aa).

The protein belongs to the SepF family. In terms of assembly, homodimer. Interacts with FtsZ.

The protein localises to the cytoplasm. Functionally, cell division protein that is part of the divisome complex and is recruited early to the Z-ring. Probably stimulates Z-ring formation, perhaps through the cross-linking of FtsZ protofilaments. Its function overlaps with FtsA. This is Cell division protein SepF from Clostridium beijerinckii (strain ATCC 51743 / NCIMB 8052) (Clostridium acetobutylicum).